The chain runs to 232 residues: 5'-methylthioadenosine/S-adenosylhomocysteine nucleosidase (232 aa).

Catalysis depends on Glu-12, which acts as the Proton acceptor. Substrate contacts are provided by residues Gly-78, Ile-152, and 173–174 (ME). The active-site Proton donor is the Asp-197.

The protein belongs to the PNP/UDP phosphorylase family. MtnN subfamily. In terms of assembly, homodimer.

It catalyses the reaction S-adenosyl-L-homocysteine + H2O = S-(5-deoxy-D-ribos-5-yl)-L-homocysteine + adenine. It carries out the reaction S-methyl-5'-thioadenosine + H2O = 5-(methylsulfanyl)-D-ribose + adenine. The enzyme catalyses 5'-deoxyadenosine + H2O = 5-deoxy-D-ribose + adenine. It participates in amino-acid biosynthesis; L-methionine biosynthesis via salvage pathway; S-methyl-5-thio-alpha-D-ribose 1-phosphate from S-methyl-5'-thioadenosine (hydrolase route): step 1/2. Catalyzes the irreversible cleavage of the glycosidic bond in both 5'-methylthioadenosine (MTA) and S-adenosylhomocysteine (SAH/AdoHcy) to adenine and the corresponding thioribose, 5'-methylthioribose and S-ribosylhomocysteine, respectively. Also cleaves 5'-deoxyadenosine, a toxic by-product of radical S-adenosylmethionine (SAM) enzymes, into 5-deoxyribose and adenine. Thus, is required for in vivo function of the radical SAM enzymes biotin synthase and lipoic acid synthase, that are inhibited by 5'-deoxyadenosine accumulation. The protein is 5'-methylthioadenosine/S-adenosylhomocysteine nucleosidase of Escherichia coli O9:H4 (strain HS).